A 152-amino-acid chain; its full sequence is Small ribosomal subunit protein uS15 (152 aa).

A compositionally biased stretch (basic residues) spans 1 to 19; it reads MAKMHTRRKGRSRSTRPVR. The disordered stretch occupies residues 1–21; it reads MAKMHTRRKGRSRSTRPVRKT.

This sequence belongs to the universal ribosomal protein uS15 family. Part of the 30S ribosomal subunit.

The polypeptide is Small ribosomal subunit protein uS15 (Methanocella arvoryzae (strain DSM 22066 / NBRC 105507 / MRE50)).